A 653-amino-acid polypeptide reads, in one-letter code: Serine/threonine-protein phosphatase with EF-hands 1 (653 aa).

The IQ domain maps to 16 to 45 (SLRAALIIQNWYRGYKARLKARQHYALTIF). Positions 121–455 (IDLLLEAFKE…PRFFQYQVTK (335 aa)) are catalytic. D172, H174, D201, and N233 together coordinate Mn(2+). Residue H234 is the Proton donor of the active site. The Mn(2+) site is built by H285 and H403. EF-hand domains lie at 483 to 518 (SRKS…ILGL), 566 to 601 (RYRS…FSSH), and 606 to 641 (IDDS…VHRY). Residues D579, D581, S583, E590, D619, N621, D623, S625, and E630 each coordinate Ca(2+).

It belongs to the PPP phosphatase family. Requires Mn(2+) as cofactor. It depends on Mg(2+) as a cofactor. In terms of tissue distribution, detected in retina and retinal derived Y-79 retinoblastoma cells. Also found in fetal brain.

The enzyme catalyses O-phospho-L-seryl-[protein] + H2O = L-seryl-[protein] + phosphate. It catalyses the reaction O-phospho-L-threonyl-[protein] + H2O = L-threonyl-[protein] + phosphate. Activated by calcium. Its function is as follows. May have a role in the recovery or adaptation response of photoreceptors. May have a role in development. The polypeptide is Serine/threonine-protein phosphatase with EF-hands 1 (PPEF1) (Homo sapiens (Human)).